We begin with the raw amino-acid sequence, 208 residues long: Protein-L-isoaspartate O-methyltransferase (208 aa).

The active site involves Ser59.

The protein belongs to the methyltransferase superfamily. L-isoaspartyl/D-aspartyl protein methyltransferase family.

The protein localises to the cytoplasm. It carries out the reaction [protein]-L-isoaspartate + S-adenosyl-L-methionine = [protein]-L-isoaspartate alpha-methyl ester + S-adenosyl-L-homocysteine. Functionally, catalyzes the methyl esterification of L-isoaspartyl residues in peptides and proteins that result from spontaneous decomposition of normal L-aspartyl and L-asparaginyl residues. It plays a role in the repair and/or degradation of damaged proteins. This Yersinia pseudotuberculosis serotype O:1b (strain IP 31758) protein is Protein-L-isoaspartate O-methyltransferase.